The following is a 182-amino-acid chain: ATP-dependent protease subunit HslV (182 aa).

Thr-7 is an active-site residue. Positions 166, 169, and 172 each coordinate Na(+).

This sequence belongs to the peptidase T1B family. HslV subfamily. In terms of assembly, a double ring-shaped homohexamer of HslV is capped on each side by a ring-shaped HslU homohexamer. The assembly of the HslU/HslV complex is dependent on binding of ATP.

The protein localises to the cytoplasm. The enzyme catalyses ATP-dependent cleavage of peptide bonds with broad specificity.. With respect to regulation, allosterically activated by HslU binding. Functionally, protease subunit of a proteasome-like degradation complex believed to be a general protein degrading machinery. The protein is ATP-dependent protease subunit HslV of Albidiferax ferrireducens (strain ATCC BAA-621 / DSM 15236 / T118) (Rhodoferax ferrireducens).